A 448-amino-acid polypeptide reads, in one-letter code: Fumarate hydratase class II (448 aa).

Residues 83–85 (SGT), 113–116 (HPND), 123–125 (SSN), and Thr171 contribute to the substrate site. His172 acts as the Proton donor/acceptor in catalysis. Ser302 is a catalytic residue. Substrate-binding positions include Ser303 and 308–310 (KVN).

The protein belongs to the class-II fumarase/aspartase family. Fumarase subfamily. In terms of assembly, homotetramer.

It localises to the cytoplasm. The enzyme catalyses (S)-malate = fumarate + H2O. It participates in carbohydrate metabolism; tricarboxylic acid cycle; (S)-malate from fumarate: step 1/1. Involved in the TCA cycle. Catalyzes the stereospecific interconversion of fumarate to L-malate. In Blochmanniella floridana, this protein is Fumarate hydratase class II.